A 387-amino-acid polypeptide reads, in one-letter code: Protein arginine N-methyltransferase 1 (387 aa).

The segment at Met-1–Gly-60 is disordered. A compositionally biased stretch (low complexity) spans Glu-34–Gly-44. The 322-residue stretch at Ala-66–Arg-387 folds into the SAM-dependent MTase PRMT-type domain. The S-adenosyl-L-methionine site is built by His-79, Arg-88, Gly-112, Glu-134, and Glu-163. Active-site residues include Glu-178 and Glu-187.

This sequence belongs to the class I-like SAM-binding methyltransferase superfamily. Protein arginine N-methyltransferase family.

It is found in the nucleus. The enzyme catalyses L-arginyl-[protein] + S-adenosyl-L-methionine = N(omega)-methyl-L-arginyl-[protein] + S-adenosyl-L-homocysteine + H(+). It carries out the reaction L-arginyl-[protein] + 2 S-adenosyl-L-methionine = N(omega),N(omega)-dimethyl-L-arginyl-[protein] + 2 S-adenosyl-L-homocysteine + 2 H(+). Its function is as follows. Arginine methyltransferase that methylates (mono and asymmetric dimethylation) the guanidino nitrogens of arginyl residues present in target proteins. This Oryza sativa subsp. indica (Rice) protein is Protein arginine N-methyltransferase 1 (PRMT1).